A 695-amino-acid chain; its full sequence is DSC E3 ubiquitin ligase complex subunit 1 (695 aa).

The N-terminal stretch at 1–25 (MDRRRWVPSTPVVTLLLLFMLFAPA) is a signal peptide. Residues 26 to 319 (PRLPSRNGES…KGPRNFVLEN (294 aa)) are Lumenal-facing. Residues 320 to 340 (HLVRFSSLYIFIVLSQIFVLL) form a helical membrane-spanning segment. Topologically, residues 341-353 (RQMRINSPSHVQR) are cytoplasmic. Residues 354 to 374 (LSFLTIAMQAGLDAYIAIFFL) traverse the membrane as a helical segment. Residues 375–382 (STNAVIEK) are Lumenal-facing. A helical transmembrane segment spans residues 383–403 (GYLPFVSVAFLSLVPSVMFTM). Residues 404-486 (RYLALILRVQ…QRDWSAVCLR (83 aa)) are Cytoplasmic-facing. The segment at 419 to 473 (PPAPRPVTNNSSNNNTNQSNASNENSPNAPSAANDNTETTTVNPPQEDDQPMTQH) is disordered. Positions 427 to 454 (NNSSNNNTNQSNASNENSPNAPSAANDN) are enriched in low complexity. A helical transmembrane segment spans residues 487-507 (FYFIILVVCIASLYSAFWPVI). Over 508–509 (YR) the chain is Lumenal. The helical transmembrane segment at 510–530 (FYFISALIFTSYSFWIPQIIQ) threads the bilayer. Over 531 to 540 (NVKQGTSRSF) the chain is Cytoplasmic. A helical transmembrane segment spans residues 541–561 (TWTYILGASVLRLYLPLAIFI). Topologically, residues 562–572 (DSELILGFPPK) are lumenal. A helical transmembrane segment spans residues 573 to 593 (YFFALGLVLWMLFQVLVLLVQ). Residues 594–695 (DTLGPRFFLP…PVCRCHLPAV (102 aa)) lie on the Cytoplasmic side of the membrane. The RING-type; atypical zinc finger occupies 634 to 689 (CPICMQPIELVSTGSTLNPASMMVRRNYMLTPCHHLYHRQCLLQWMETRSICPVCR).

In terms of assembly, component of the DSC E3 ubiquitin ligase complex composed of dsc1, dsc2, dsc3 and dsc4.

The protein localises to the endoplasmic reticulum membrane. It is found in the golgi apparatus membrane. It catalyses the reaction S-ubiquitinyl-[E2 ubiquitin-conjugating enzyme]-L-cysteine + [acceptor protein]-L-lysine = [E2 ubiquitin-conjugating enzyme]-L-cysteine + N(6)-ubiquitinyl-[acceptor protein]-L-lysine.. It functions in the pathway protein modification; protein ubiquitination. Functionally, catalytic component of the DSC E3 ubiquitin ligase complex which is required for the sre1 transcriptional activator proteolytic cleavage to release the soluble transcription factor from the membrane in low oxygen or sterol conditions. The complex also plays an important role in the multivesicular body (MVB) pathway and functions in a post-endoplasmic reticulum pathway for protein degradation. The polypeptide is DSC E3 ubiquitin ligase complex subunit 1 (dsc1) (Schizosaccharomyces pombe (strain 972 / ATCC 24843) (Fission yeast)).